Consider the following 336-residue polypeptide: Large ribosomal subunit protein uL10 (336 aa).

The interval 305–336 (AVVATEEAPKAETKKEEKKEEAAPAAGLGLLF) is disordered. Residues 311–326 (EAPKAETKKEEKKEEA) are compositionally biased toward basic and acidic residues.

The protein belongs to the universal ribosomal protein uL10 family. As to quaternary structure, part of the 50S ribosomal subunit. Forms part of the ribosomal stalk which helps the ribosome interact with GTP-bound translation factors. Forms a heptameric L10(L12)2(L12)2(L12)2 complex, where L10 forms an elongated spine to which the L12 dimers bind in a sequential fashion.

Its function is as follows. Forms part of the ribosomal stalk, playing a central role in the interaction of the ribosome with GTP-bound translation factors. In Methanococcus vannielii (strain ATCC 35089 / DSM 1224 / JCM 13029 / OCM 148 / SB), this protein is Large ribosomal subunit protein uL10.